We begin with the raw amino-acid sequence, 139 residues long: GSK3B-interacting protein (139 aa).

The interval 41–45 (VNDVL) is required for PRKAR2A interaction; contributes to a protective effect against H(2)O(2)-induced apoptosis. Residues 115–139 (SPAYREAFGNALLQRLEALKREGQS) form an interaction with GSK3B and acts as a GSK3B inhibitor region.

Belongs to the GSKIP family. As to quaternary structure, forms a complex composed of PRKAR2A or PRKAR2B, GSK3B and GSKIP through GSKIP interaction; facilitates PKA-induced phosphorylation of GSK3B leading to GSK3B inactivation; recruits DNM1L through GSK3B for PKA-mediated phosphorylation of DNM1L; promotes beta-catenin degradation through GSK3B-induced phosphorylation of beta-catenin; stabilizes beta-catenin and enhances Wnt-induced signaling through PKA-induced phosphorylation of beta-catenin. Interacts with GSK3B; induces GSK3B-mediated phosphorylation of GSKIP and inhibits GSK3B kinase activity. In terms of processing, phosphorylated by GSK3B.

The protein resides in the cytoplasm. The protein localises to the nucleus. A-kinase anchoring protein for GSK3B and PKA that regulates or facilitates their kinase activity towards their targets. The ternary complex enhances Wnt-induced signaling by facilitating the GSK3B- and PKA-induced phosphorylation of beta-catenin leading to beta-catenin degradation and stabilization respectively. Upon cAMP activation, the ternary complex contributes to neuroprotection against oxidative stress-induced apoptosis by facilitating the PKA-induced phosphorylation of DML1 and PKA-induced inactivation of GSK3B. During neurite outgrowth promotes neuron proliferation; while increases beta-catenin-induced transcriptional activity through GSK3B kinase activity inhibition, reduces N-cadherin level to promote cell cycle progression. May play a role in cleft palate formation and is required for postnatal life through modulation of the activity of GSK3B during development. The sequence is that of GSK3B-interacting protein from Bos taurus (Bovine).